A 602-amino-acid chain; its full sequence is Elongation factor 4 (602 aa).

A tr-type G domain is found at 6 to 188 (DHIRNFSIVA…AIVNKLPAPK (183 aa)). Residues 18–23 (DHGKST) and 135–138 (NKID) contribute to the GTP site.

This sequence belongs to the TRAFAC class translation factor GTPase superfamily. Classic translation factor GTPase family. LepA subfamily.

It localises to the cell inner membrane. The enzyme catalyses GTP + H2O = GDP + phosphate + H(+). Functionally, required for accurate and efficient protein synthesis under certain stress conditions. May act as a fidelity factor of the translation reaction, by catalyzing a one-codon backward translocation of tRNAs on improperly translocated ribosomes. Back-translocation proceeds from a post-translocation (POST) complex to a pre-translocation (PRE) complex, thus giving elongation factor G a second chance to translocate the tRNAs correctly. Binds to ribosomes in a GTP-dependent manner. This is Elongation factor 4 from Brucella suis (strain ATCC 23445 / NCTC 10510).